We begin with the raw amino-acid sequence, 427 residues long: Piwi protein (427 aa).

The tract at residues P38–K167 is mid domain. The Piwi domain maps to G110–R406. Residues Y118–Y124 form a binds 5'-phosphorylated end of guide DNA region. The binds target DNA stretch occupies residues R147–N148. The tract at residues T150–N155 is binds guide DNA. 2 residues coordinate a divalent metal cation: Q159 and L427. The segment at P168–L427 is PIWI domain.

The protein belongs to the argonaute family. Short pAgo subfamily. Homodimer probably stabilized by DNA. Each subunit is capable of interacting with a DNA molecule. It depends on a divalent metal cation as a cofactor.

Its function is as follows. Might play a role in defense against invading genetic elements, using short nucleic acid sequences as guides to bind complementary target strands, resulting in slicing of the target nucleic acid. Binds nucleic acids with decreasing affinity in the following order; ssDNA, ssRNA, dsDNA, RNA-DNA, RNA-RNA. Association of the 5' seed region of the guide strand (nucleotides 2-7) with AfPiwi increases affinity for the corresponding target strand; the greatest increase in affinity is for guide DNA with target RNA. The protein is Piwi protein of Archaeoglobus fulgidus (strain ATCC 49558 / DSM 4304 / JCM 9628 / NBRC 100126 / VC-16).